The following is a 71-amino-acid chain: Putative membrane protein insertion efficiency factor (71 aa).

Belongs to the UPF0161 family.

The protein resides in the cell membrane. In terms of biological role, could be involved in insertion of integral membrane proteins into the membrane. This chain is Putative membrane protein insertion efficiency factor, found in Acetivibrio thermocellus (strain ATCC 27405 / DSM 1237 / JCM 9322 / NBRC 103400 / NCIMB 10682 / NRRL B-4536 / VPI 7372) (Clostridium thermocellum).